We begin with the raw amino-acid sequence, 723 residues long: Fatty acid oxidation complex subunit alpha (723 aa).

An enoyl-CoA hydratase/isomerase region spans residues 1-189; it reads MIYQAETLQV…KIGLLDAVVD (189 aa). Asp-296 is a substrate binding site. The interval 311–723 is 3-hydroxyacyl-CoA dehydrogenase; the sequence is NKETQRAAVL…FYGAQQQGSI (413 aa). NAD(+) is bound by residues Met-325, Asp-344, 401–403, Lys-408, and Ser-430; that span reads VVE. His-451 serves as the catalytic For 3-hydroxyacyl-CoA dehydrogenase activity. Asn-454 is an NAD(+) binding site. The substrate site is built by Asn-501 and Tyr-661.

It in the N-terminal section; belongs to the enoyl-CoA hydratase/isomerase family. In the C-terminal section; belongs to the 3-hydroxyacyl-CoA dehydrogenase family. Heterotetramer of two alpha chains (FadB) and two beta chains (FadA).

It carries out the reaction a (3S)-3-hydroxyacyl-CoA + NAD(+) = a 3-oxoacyl-CoA + NADH + H(+). The catalysed reaction is a (3S)-3-hydroxyacyl-CoA = a (2E)-enoyl-CoA + H2O. The enzyme catalyses a 4-saturated-(3S)-3-hydroxyacyl-CoA = a (3E)-enoyl-CoA + H2O. It catalyses the reaction (3S)-3-hydroxybutanoyl-CoA = (3R)-3-hydroxybutanoyl-CoA. It carries out the reaction a (3Z)-enoyl-CoA = a 4-saturated (2E)-enoyl-CoA. The catalysed reaction is a (3E)-enoyl-CoA = a 4-saturated (2E)-enoyl-CoA. The protein operates within lipid metabolism; fatty acid beta-oxidation. Functionally, involved in the aerobic and anaerobic degradation of long-chain fatty acids via beta-oxidation cycle. Catalyzes the formation of 3-oxoacyl-CoA from enoyl-CoA via L-3-hydroxyacyl-CoA. It can also use D-3-hydroxyacyl-CoA and cis-3-enoyl-CoA as substrate. The protein is Fatty acid oxidation complex subunit alpha of Vibrio vulnificus (strain YJ016).